A 232-amino-acid polypeptide reads, in one-letter code: (S)-2-haloacid dehalogenase (232 aa).

The Nucleophile role is filled by Asp-10. Residues Leu-11–Tyr-12, Arg-41, and Ser-118–Asn-119 contribute to the an (S)-2-haloacid site. Positions Ser-175–Asp-180 are important for catalytic activity.

The protein belongs to the HAD-like hydrolase superfamily. S-2-haloalkanoic acid dehalogenase family. Homodimer.

It carries out the reaction an (S)-2-haloacid + H2O = a (2R)-2-hydroxycarboxylate + a halide anion + H(+). The enzyme catalyses (S)-2-chloropropanoate + H2O = (R)-lactate + chloride + H(+). Its function is as follows. Catalyzes the hydrolytic dehalogenation of small (S)-2-haloalkanoic acids to yield the corresponding (R)-2-hydroxyalkanoic acids. Acts on acids of short chain lengths, C(2) to C(4), with inversion of configuration at C-2. Active with 2-halogenated carboxylic acids and converts only the S-isomer (or L-isomer) of 2-chloropropionic acid with inversion of configuration to produce R-lactate (or D-isomer). In Pseudomonas sp. (strain YL), this protein is (S)-2-haloacid dehalogenase.